The sequence spans 397 residues: Acetyl-CoA acetyltransferase, cytosolic (397 aa).

M1 carries the post-translational modification N-acetylmethionine. Catalysis depends on C92, which acts as the Acyl-thioester intermediate. The residue at position 200 (K200) is an N6-acetyllysine. Residues R223 and S226 each coordinate CoA. An N6-acetyllysine mark is found at K233 and K235. S252 lines the CoA pocket. C383 functions as the Proton donor/acceptor in the catalytic mechanism.

Belongs to the thiolase-like superfamily. Thiolase family. As to quaternary structure, homotetramer.

The protein resides in the cytoplasm. Its subcellular location is the cytosol. The catalysed reaction is 2 acetyl-CoA = acetoacetyl-CoA + CoA. Its pathway is lipid metabolism; fatty acid metabolism. In terms of biological role, involved in the biosynthetic pathway of cholesterol. This is Acetyl-CoA acetyltransferase, cytosolic (Acat2) from Mus musculus (Mouse).